Here is a 463-residue protein sequence, read N- to C-terminus: Glutamate-1-semialdehyde 2,1-aminomutase, chloroplastic (463 aa).

The transit peptide at 1–30 (MQMQLNAKTVQGAFKAQRPRSVRGNVAVRA) directs the protein to the chloroplast. Lys303 bears the N6-(pyridoxal phosphate)lysine mark.

The protein belongs to the class-III pyridoxal-phosphate-dependent aminotransferase family. HemL subfamily. As to quaternary structure, homodimer. Pyridoxal 5'-phosphate is required as a cofactor.

The protein localises to the plastid. It is found in the chloroplast. It catalyses the reaction (S)-4-amino-5-oxopentanoate = 5-aminolevulinate. Its pathway is porphyrin-containing compound metabolism; protoporphyrin-IX biosynthesis; 5-aminolevulinate from L-glutamyl-tRNA(Glu): step 2/2. It functions in the pathway porphyrin-containing compound metabolism; chlorophyll biosynthesis. The chain is Glutamate-1-semialdehyde 2,1-aminomutase, chloroplastic (GSA) from Chlamydomonas reinhardtii (Chlamydomonas smithii).